A 753-amino-acid chain; its full sequence is MTILNHTLGFPRVGLRRELKKAQESYWAGNSTREELLTVGRELRARHWDQQKQAGIDLLPVGDFAWYDHVLTTSLLLGNVPPRHQNKDGSVDIDTLFRIGRGRAPTGEPAAAAEMTKWFNTNYHYMVPEFVKGQQFKLTWTQLLEEVDEALALGHNVKPVLLGPVTYLWLGKVKGEQFDRLSLLNDILPVYQQVLAELAKRGIEWVQIDEPALVLELPQAWLDAYKPAYDALQGQVKLLLTTYFEGVTPNLDTITALPVQGLHVDLVHGKDDVAELHKRLPSDWLLSAGLINGRNVWRADLTEKYAQIKDIVGKRDLWVASSCSLLHSPIDLSVETRLDAEVKSWFAFALQKCHELALLRDALNSGDTAALAEWSAPIQARRHSTRVHNPAVEKRLAAITAQDSQRANVYEVRAEAQRARFKLPAWPTTTIGSFPQTTEIRTLRLDFKKGNLDANNYRTGIAEHIRQAIVEQERLGLDVLVHGEAERNDMVEYFGEHLDGFVFTQNGWVQSYGSRCVKPPIVIGDVSRPAPITVEWAKYAQSLTDKPVKGMLTGPVTILCWSFPREDVSRETIAKQIALALRDEVADLEAAGIGIIQIDEPALREGLPLRRSDWDAYLQWGVEAFRINAAVAKDDTQIHTHMCYCEFNDIMDSIAALDADVITIETSRSDMELLESFEEFDYPNEIGPGVYDIHSPNVPSVEWIEALLKKAAKRIPAERLWVNPDCGLKTRGWPETRAALANMVQAAQNLRRG.

Residues 17–20 and K117 each bind 5-methyltetrahydropteroyltri-L-glutamate; that span reads RELK. Residues 431–433 and E484 each bind L-homocysteine; that span reads IGS. L-methionine-binding positions include 431-433 and E484; that span reads IGS. 5-methyltetrahydropteroyltri-L-glutamate-binding positions include 515–516 and W561; that span reads RC. D599 contacts L-homocysteine. An L-methionine-binding site is contributed by D599. E605 is a 5-methyltetrahydropteroyltri-L-glutamate binding site. Zn(2+) contacts are provided by H641, C643, and E665. Residue H694 is the Proton donor of the active site. Residue C726 participates in Zn(2+) binding.

The protein belongs to the vitamin-B12 independent methionine synthase family. The cofactor is Zn(2+).

The catalysed reaction is 5-methyltetrahydropteroyltri-L-glutamate + L-homocysteine = tetrahydropteroyltri-L-glutamate + L-methionine. Its pathway is amino-acid biosynthesis; L-methionine biosynthesis via de novo pathway; L-methionine from L-homocysteine (MetE route): step 1/1. Its function is as follows. Catalyzes the transfer of a methyl group from 5-methyltetrahydrofolate to homocysteine resulting in methionine formation. The chain is 5-methyltetrahydropteroyltriglutamate--homocysteine methyltransferase from Shigella sonnei (strain Ss046).